Consider the following 117-residue polypeptide: Large ribosomal subunit protein bL17 (117 aa).

It belongs to the bacterial ribosomal protein bL17 family. In terms of assembly, part of the 50S ribosomal subunit. Contacts protein L32.

The protein is Large ribosomal subunit protein bL17 of Campylobacter jejuni subsp. jejuni serotype O:6 (strain 81116 / NCTC 11828).